Reading from the N-terminus, the 359-residue chain is MISKDPRSSLPPGFRFHPTDEELILHYLRKKVSSSPVPLSIIADVDIYKSDPWDLPAKAPFGEKEWYFFSPRDRKYPNGARPNRAAASGYWKATGTDKLIAVPNGEGFHENIGIKKALVFYRGKPPKGVKTNWIMHEYRLADSLSPKRINSSRSGGSEVNNNFGDRNSKEYSMRLDDWVLCRIYKKSHASLSSPDVALVTSNQEHEENDNEPFVDRGTFLPNLQNDQPLKRQKSSCSFSNLLDATDLTFLANFLNETPENRSESDFSFMIGNFSNPDIYGNHYLDQKLPQLSSPTSETSGIGSKRERVDFAEETINASKKMMNTYSYNNSIDQMDHSMMQQPSFLNQELMMSSHLQYQG.

The 177-residue stretch at 10–186 (LPPGFRFHPT…DWVLCRIYKK (177 aa)) folds into the NAC domain. A DNA-binding region spans residues 112 to 192 (IGIKKALVFY…IYKKSHASLS (81 aa)). Disordered regions lie at residues 147–166 (KRIN…FGDR) and 200–226 (TSNQ…LQND). Residues 148 to 165 (RINSSRSGGSEVNNNFGD) are compositionally biased toward polar residues.

The protein localises to the nucleus. Transcription factor that binds to the promoter of ACO5, an ACC oxidase involved in ethylene biosynthesis. Mediates waterlogging-induced hyponastic leaf movement, and cell expansion in abaxial cells of the basal petiole region, by directly regulating the expression of ACO5. Required for normal seed development and morphology. In Arabidopsis thaliana (Mouse-ear cress), this protein is NAC transcription factor 47.